The sequence spans 340 residues: Holliday junction branch migration complex subunit RuvB (340 aa).

Residues 1–181 are large ATPase domain (RuvB-L); sequence MDRIVEIEKA…FGMQFRLNFY (181 aa). Residues Leu-20, Arg-21, Gly-62, Lys-65, Thr-66, Thr-67, 128–130, Arg-171, Tyr-181, and Arg-218 each bind ATP; that span reads EDF. Thr-66 provides a ligand contact to Mg(2+). Residues 182–252 are small ATPAse domain (RuvB-S); it reads TSDELAKIVQ…RAKSSLDALG (71 aa). The segment at 255–340 is head domain (RuvB-H); it reads DLGFDEMDLK…TQKGLFDEDQ (86 aa). Positions 309 and 314 each coordinate DNA.

This sequence belongs to the RuvB family. As to quaternary structure, homohexamer. Forms an RuvA(8)-RuvB(12)-Holliday junction (HJ) complex. HJ DNA is sandwiched between 2 RuvA tetramers; dsDNA enters through RuvA and exits via RuvB. An RuvB hexamer assembles on each DNA strand where it exits the tetramer. Each RuvB hexamer is contacted by two RuvA subunits (via domain III) on 2 adjacent RuvB subunits; this complex drives branch migration. In the full resolvosome a probable DNA-RuvA(4)-RuvB(12)-RuvC(2) complex forms which resolves the HJ.

Its subcellular location is the cytoplasm. It catalyses the reaction ATP + H2O = ADP + phosphate + H(+). In terms of biological role, the RuvA-RuvB-RuvC complex processes Holliday junction (HJ) DNA during genetic recombination and DNA repair, while the RuvA-RuvB complex plays an important role in the rescue of blocked DNA replication forks via replication fork reversal (RFR). RuvA specifically binds to HJ cruciform DNA, conferring on it an open structure. The RuvB hexamer acts as an ATP-dependent pump, pulling dsDNA into and through the RuvAB complex. RuvB forms 2 homohexamers on either side of HJ DNA bound by 1 or 2 RuvA tetramers; 4 subunits per hexamer contact DNA at a time. Coordinated motions by a converter formed by DNA-disengaged RuvB subunits stimulates ATP hydrolysis and nucleotide exchange. Immobilization of the converter enables RuvB to convert the ATP-contained energy into a lever motion, pulling 2 nucleotides of DNA out of the RuvA tetramer per ATP hydrolyzed, thus driving DNA branch migration. The RuvB motors rotate together with the DNA substrate, which together with the progressing nucleotide cycle form the mechanistic basis for DNA recombination by continuous HJ branch migration. Branch migration allows RuvC to scan DNA until it finds its consensus sequence, where it cleaves and resolves cruciform DNA. The sequence is that of Holliday junction branch migration complex subunit RuvB from Campylobacter hominis (strain ATCC BAA-381 / DSM 21671 / CCUG 45161 / LMG 19568 / NCTC 13146 / CH001A).